A 170-amino-acid polypeptide reads, in one-letter code: Negative modulator of initiation of replication (170 aa).

Residues 139–145 form an interaction with DNA region; sequence NTNTGRK.

It belongs to the SeqA family. As to quaternary structure, homodimer. Polymerizes to form helical filaments.

Its subcellular location is the cytoplasm. Its function is as follows. Negative regulator of replication initiation, which contributes to regulation of DNA replication and ensures that replication initiation occurs exactly once per chromosome per cell cycle. Binds to pairs of hemimethylated GATC sequences in the oriC region, thus preventing assembly of replication proteins and re-initiation at newly replicated origins. Repression is relieved when the region becomes fully methylated. The polypeptide is Negative modulator of initiation of replication (Tolumonas auensis (strain DSM 9187 / NBRC 110442 / TA 4)).